Reading from the N-terminus, the 236-residue chain is Alpha-tubulin N-acetyltransferase (236 aa).

The 181-residue stretch at 21-201 (ASVPDGVSRW…NKFVVFHGFF (181 aa)) folds into the N-acetyltransferase domain. Acetyl-CoA-binding positions include 134-147 (FYVD…GYGK) and 171-180 (SDKLLGFMKK). The interval 217-236 (SPTGAAAAATGTKAKNEMPG) is disordered. The segment covering 219-229 (TGAAAAATGTK) has biased composition (low complexity).

It belongs to the acetyltransferase ATAT1 family.

It carries out the reaction L-lysyl-[alpha-tubulin] + acetyl-CoA = N(6)-acetyl-L-lysyl-[alpha-tubulin] + CoA + H(+). Specifically acetylates 'Lys-40' in alpha-tubulin on the lumenal side of microtubules. Promotes microtubule destabilization and accelerates microtubule dynamics; this activity may be independent of acetylation activity. Acetylates alpha-tubulin with a slow enzymatic rate, due to a catalytic site that is not optimized for acetyl transfer. Enters the microtubule through each end and diffuses quickly throughout the lumen of microtubules. Acetylates only long/old microtubules because of its slow acetylation rate since it does not have time to act on dynamically unstable microtubules before the enzyme is released. This chain is Alpha-tubulin N-acetyltransferase, found in Leishmania braziliensis.